A 469-amino-acid chain; its full sequence is Actin-related protein 4 (469 aa).

Residues 104 to 136 (PERSTPPSKKGINISDDGDVPMEDDGNNNEDAT) form a disordered region. The segment covering 119 to 136 (DDGDVPMEDDGNNNEDAT) has biased composition (acidic residues).

The protein belongs to the actin family. ARP4 subfamily. Component of the NuA4 histone acetyltransferase complex, of the INO80 chromatin remodeling complex, and of the SWR1 chromatin remodeling complex.

It is found in the nucleus. Chromatin interaction component of the NuA4 histone acetyltransferase complex which is involved in transcriptional activation of selected genes principally by acetylation of nucleosomal histone H4 and H2A. The NuA4 complex is also involved in DNA repair. Is required for NuA4 complex integrity. Component of the SWR1 complex which mediates the ATP-dependent exchange of histone H2A for the H2A variant H2A.Z leading to transcriptional regulation of selected genes by chromatin remodeling. Component of the INO80 complex which remodels chromatin by shifting nucleosomes and is involved in DNA repair. The protein is Actin-related protein 4 (arp-4) of Neurospora crassa (strain ATCC 24698 / 74-OR23-1A / CBS 708.71 / DSM 1257 / FGSC 987).